Reading from the N-terminus, the 187-residue chain is ATP synthase subunit delta (187 aa).

Belongs to the ATPase delta chain family. In terms of assembly, F-type ATPases have 2 components, F(1) - the catalytic core - and F(0) - the membrane proton channel. F(1) has five subunits: alpha(3), beta(3), gamma(1), delta(1), epsilon(1). F(0) has three main subunits: a(1), b(2) and c(10-14). The alpha and beta chains form an alternating ring which encloses part of the gamma chain. F(1) is attached to F(0) by a central stalk formed by the gamma and epsilon chains, while a peripheral stalk is formed by the delta and b chains.

The protein localises to the cell membrane. Its function is as follows. F(1)F(0) ATP synthase produces ATP from ADP in the presence of a proton or sodium gradient. F-type ATPases consist of two structural domains, F(1) containing the extramembraneous catalytic core and F(0) containing the membrane proton channel, linked together by a central stalk and a peripheral stalk. During catalysis, ATP synthesis in the catalytic domain of F(1) is coupled via a rotary mechanism of the central stalk subunits to proton translocation. Functionally, this protein is part of the stalk that links CF(0) to CF(1). It either transmits conformational changes from CF(0) to CF(1) or is implicated in proton conduction. This Mesomycoplasma hyopneumoniae (strain 7448) (Mycoplasma hyopneumoniae) protein is ATP synthase subunit delta.